We begin with the raw amino-acid sequence, 317 residues long: Malate dehydrogenase (317 aa).

NAD(+)-binding positions include 7–13 (GAAGGIG) and Asp-34. 2 residues coordinate substrate: Arg-81 and Arg-87. NAD(+) is bound by residues Asn-94 and 117–119 (VTN). Positions 119 and 153 each coordinate substrate. His-177 acts as the Proton acceptor in catalysis. Met-231 contributes to the NAD(+) binding site.

It belongs to the LDH/MDH superfamily. MDH type 1 family. Homodimer.

The enzyme catalyses (S)-malate + NAD(+) = oxaloacetate + NADH + H(+). Its function is as follows. Catalyzes the reversible oxidation of malate to oxaloacetate. In Actinobacillus pleuropneumoniae serotype 5b (strain L20), this protein is Malate dehydrogenase.